The chain runs to 383 residues: Succinyl-diaminopimelate desuccinylase (383 aa).

His-79 contributes to the Zn(2+) binding site. Asp-81 is an active-site residue. Asp-110 lines the Zn(2+) pocket. Glu-141 serves as the catalytic Proton acceptor. Zn(2+)-binding residues include Glu-142, Glu-170, and His-355.

The protein belongs to the peptidase M20A family. DapE subfamily. Homodimer. Zn(2+) serves as cofactor. Requires Co(2+) as cofactor.

It catalyses the reaction N-succinyl-(2S,6S)-2,6-diaminopimelate + H2O = (2S,6S)-2,6-diaminopimelate + succinate. Its pathway is amino-acid biosynthesis; L-lysine biosynthesis via DAP pathway; LL-2,6-diaminopimelate from (S)-tetrahydrodipicolinate (succinylase route): step 3/3. In terms of biological role, catalyzes the hydrolysis of N-succinyl-L,L-diaminopimelic acid (SDAP), forming succinate and LL-2,6-diaminopimelate (DAP), an intermediate involved in the bacterial biosynthesis of lysine and meso-diaminopimelic acid, an essential component of bacterial cell walls. The sequence is that of Succinyl-diaminopimelate desuccinylase from Helicobacter pylori (strain ATCC 700392 / 26695) (Campylobacter pylori).